We begin with the raw amino-acid sequence, 388 residues long: Flavin-dependent monooxygenase (388 aa).

FAD-binding positions include 26–27 (PV) and 45–48 (YERD). Position 54 (Arg54) interacts with NADPH. 3 residues coordinate FAD: Asp61, Arg117, and Leu139. 2 residues coordinate substrate: Gln192 and Arg213. FAD contacts are provided by residues Asp311 and 321-324 (GQGV).

The protein belongs to the aromatic-ring hydroxylase family. TetX subfamily. As to quaternary structure, monomer. It depends on FAD as a cofactor.

The protein resides in the cytoplasm. It catalyses the reaction a tetracycline + NADPH + O2 + H(+) = an 11a-hydroxytetracycline + NADP(+) + H2O. The enzyme catalyses tetracycline + NADPH + O2 + H(+) = 11a-hydroxytetracycline + NADP(+) + H2O. It carries out the reaction tigecycline + NADPH + O2 + H(+) = 11a-hydroxytigecycline + NADP(+) + H2O. The catalysed reaction is oxytetracycline + NADPH + O2 + H(+) = 11a-hydroxy-oxytetracycline + NADP(+) + H2O. With respect to regulation, anhydrotetracycline, a poor substrate, prevents tetracycline degradation in vitro. Its function is as follows. An FAD-requiring monooxygenase active on tetracycline antibiotic derivatives, which leads to their inactivation. Hydroxylates carbon 11a of oxytetracycline and tigecycline. Acts on many tetracycline analogs (chlorotetracycline, demeclocycline, doxycycline, minocycline, oxytetracyclinee), probably by monooxygenization. Tigecycline, a new generation tetracycline antibiotic, is rendered less effective against E.coli by this monooxygenation, is much weaker at inhibiting translation in vitro and binds Mg(2+) considerably less well. Expression in E.coli BW25113 reduces its growth rate about 5%. The reaction probably proceeds by FAD reduction by NADPH and, second, hydroxylation of antibiotic in a ping-pong mechanism. Degrades chlortetracycline, probably by monooxygenation. Slowly oxidizes anhydrotetracycline, the final substrate in tetracycline biosynthesis. This chain is Flavin-dependent monooxygenase, found in Bacteroides thetaiotaomicron.